A 336-amino-acid chain; its full sequence is Dihydroorotate dehydrogenase (quinone) (336 aa).

FMN is bound by residues 62–66 (AGLDK) and Thr-86. Residue Lys-66 coordinates substrate. 111–115 (NRMGF) provides a ligand contact to substrate. Asn-139 and Asn-172 together coordinate FMN. Position 172 (Asn-172) interacts with substrate. Catalysis depends on Ser-175, which acts as the Nucleophile. Asn-177 contacts substrate. 2 residues coordinate FMN: Lys-217 and Thr-245. 246–247 (NT) contributes to the substrate binding site. Residues Gly-268, Gly-297, and 318 to 319 (YS) contribute to the FMN site.

The protein belongs to the dihydroorotate dehydrogenase family. Type 2 subfamily. As to quaternary structure, monomer. FMN is required as a cofactor.

Its subcellular location is the cell membrane. It catalyses the reaction (S)-dihydroorotate + a quinone = orotate + a quinol. It participates in pyrimidine metabolism; UMP biosynthesis via de novo pathway; orotate from (S)-dihydroorotate (quinone route): step 1/1. Catalyzes the conversion of dihydroorotate to orotate with quinone as electron acceptor. The polypeptide is Dihydroorotate dehydrogenase (quinone) (Salmonella arizonae (strain ATCC BAA-731 / CDC346-86 / RSK2980)).